The sequence spans 520 residues: 2-isopropylmalate synthase (520 aa).

The Pyruvate carboxyltransferase domain occupies 12-274; that stretch reads IRIFDTTLRD…DSAINTPRIV (263 aa). Positions 21, 209, 211, and 245 each coordinate Mn(2+). Residues 396 to 520 form a regulatory domain region; the sequence is RLASMTISDV…VVAGKTAAVA (125 aa).

This sequence belongs to the alpha-IPM synthase/homocitrate synthase family. LeuA type 1 subfamily. As to quaternary structure, homodimer. The cofactor is Mn(2+).

It is found in the cytoplasm. It carries out the reaction 3-methyl-2-oxobutanoate + acetyl-CoA + H2O = (2S)-2-isopropylmalate + CoA + H(+). Its pathway is amino-acid biosynthesis; L-leucine biosynthesis; L-leucine from 3-methyl-2-oxobutanoate: step 1/4. Its function is as follows. Catalyzes the condensation of the acetyl group of acetyl-CoA with 3-methyl-2-oxobutanoate (2-ketoisovalerate) to form 3-carboxy-3-hydroxy-4-methylpentanoate (2-isopropylmalate). This is 2-isopropylmalate synthase from Xanthomonas axonopodis pv. citri (strain 306).